The chain runs to 165 residues: V-type proton ATPase 16 kDa proteolipid subunit (165 aa).

The Lumenal segment spans residues 1–12; sequence MSTVFNGDETAP. The chain crosses the membrane as a helical span at residues 13-33; the sequence is FFGFLGAAAALVFSCMGAAYG. The Cytoplasmic portion of the chain corresponds to 34–55; sequence TAKSGVGVASMGVMRPELVMKS. A helical transmembrane segment spans residues 56–76; the sequence is IVPVVMAGVLGIYGLIIAVII. Residues 77-95 lie on the Lumenal side of the membrane; it reads STGINPKAKSYYLFDGYAH. Residues 96-117 form a helical membrane-spanning segment; that stretch reads LSSGLACGLAGLSAGMAIGIVG. Topologically, residues 118–129 are cytoplasmic; the sequence is DAGVRANAQQPK. The helical transmembrane segment at 130-155 threads the bilayer; that stretch reads LFVGMILILIFAEALALYGLIVGIIL. Topologically, residues 156–165 are lumenal; the sequence is SSRAGQSRAD.

Belongs to the V-ATPase proteolipid subunit family. As to quaternary structure, V-ATPase is a heteromultimeric enzyme composed of a peripheral catalytic V1 complex (main components: subunits A, B, C, D, E, and F) attached to an integral membrane V0 proton pore complex (main component: the proteolipid protein; which is present as a hexamer that forms the proton-conducting pore).

The protein resides in the vacuole membrane. Its function is as follows. Proton-conducting pore forming subunit of the membrane integral V0 complex of vacuolar ATPase. V-ATPase is responsible for acidifying a variety of intracellular compartments in eukaryotic cells. The sequence is that of V-type proton ATPase 16 kDa proteolipid subunit (VMAC1) from Mesembryanthemum crystallinum (Common ice plant).